Here is a 78-residue protein sequence, read N- to C-terminus: Protein Vpr (78 aa).

Residues 1-42 (MEQAPEDQGPQRKPHNEWTLELLEELKNEAVRHFPRIWLHGL) are homooligomerization.

It belongs to the HIV-1 VPR protein family. In terms of assembly, homooligomer, may form homodimer. Interacts with p6-gag region of the Pr55 Gag precursor protein through a (Leu-X-X)4 motif near the C-terminus of the P6gag protein. Interacts with host UNG. May interact with host RAD23A/HHR23A. Interacts with host VPRBP/DCAF1, leading to hijack the CUL4A-RBX1-DDB1-DCAF1/VPRBP complex, mediating ubiquitination of host proteins such as TERT and ZGPAT and arrest of the cell cycle in G2 phase. In terms of processing, phosphorylated on several residues by host. These phosphorylations regulate VPR activity for the nuclear import of the HIV-1 pre-integration complex.

It is found in the virion. Its subcellular location is the host nucleus. The protein resides in the host extracellular space. In terms of biological role, during virus replication, may deplete host UNG protein, and incude G2-M cell cycle arrest. Acts by targeting specific host proteins for degradation by the 26S proteasome, through association with the cellular CUL4A-DDB1 E3 ligase complex by direct interaction with host VPRPB/DCAF-1. Cell cycle arrest reportedly occurs within hours of infection and is not blocked by antiviral agents, suggesting that it is initiated by the VPR carried into the virion. Additionally, VPR induces apoptosis in a cell cycle dependent manner suggesting that these two effects are mechanistically linked. Detected in the serum and cerebrospinal fluid of AIDS patient, VPR may also induce cell death to bystander cells. Functionally, during virus entry, plays a role in the transport of the viral pre-integration (PIC) complex to the host nucleus. This function is crucial for viral infection of non-dividing macrophages. May act directly at the nuclear pore complex, by binding nucleoporins phenylalanine-glycine (FG)-repeat regions. In Homo sapiens (Human), this protein is Protein Vpr.